The following is a 254-amino-acid chain: Pyridoxine 5'-phosphate synthase (254 aa).

A 3-amino-2-oxopropyl phosphate-binding site is contributed by asparagine 8. Residue 10-11 (DH) coordinates 1-deoxy-D-xylulose 5-phosphate. Residue arginine 19 participates in 3-amino-2-oxopropyl phosphate binding. The Proton acceptor role is filled by histidine 44. Positions 46 and 51 each coordinate 1-deoxy-D-xylulose 5-phosphate. Residue glutamate 74 is the Proton acceptor of the active site. Position 104 (threonine 104) interacts with 1-deoxy-D-xylulose 5-phosphate. The Proton donor role is filled by histidine 198. 3-amino-2-oxopropyl phosphate is bound by residues glycine 199 and 220–221 (GH).

The protein belongs to the PNP synthase family. As to quaternary structure, homooctamer; tetramer of dimers.

It localises to the cytoplasm. It catalyses the reaction 3-amino-2-oxopropyl phosphate + 1-deoxy-D-xylulose 5-phosphate = pyridoxine 5'-phosphate + phosphate + 2 H2O + H(+). The protein operates within cofactor biosynthesis; pyridoxine 5'-phosphate biosynthesis; pyridoxine 5'-phosphate from D-erythrose 4-phosphate: step 5/5. Functionally, catalyzes the complicated ring closure reaction between the two acyclic compounds 1-deoxy-D-xylulose-5-phosphate (DXP) and 3-amino-2-oxopropyl phosphate (1-amino-acetone-3-phosphate or AAP) to form pyridoxine 5'-phosphate (PNP) and inorganic phosphate. This is Pyridoxine 5'-phosphate synthase from Caulobacter vibrioides (strain ATCC 19089 / CIP 103742 / CB 15) (Caulobacter crescentus).